Here is a 1240-residue protein sequence, read N- to C-terminus: Phospholipid-transporting ATPase 6 (1240 aa).

Residues 1–75 (MARRRIRSRI…TTRYNLLTFL (75 aa)) are Cytoplasmic-facing. Residues 76–97 (PKCLYEQFHRVANFYFLVAAIL) form a helical membrane-spanning segment. Over 98–101 (SVFP) the chain is Extracellular. A helical membrane pass occupies residues 102-124 (LSPFNKWSMIAPLVFVVGLSMGK). Residues 125–306 (EALEDWRRFM…SRIEKRMDYI (182 aa)) lie on the Cytoplasmic side of the membrane. The chain crosses the membrane as a helical span at residues 307-328 (IYTLFALLLTVSFISSLGFAVM). Residues 329–360 (TKLLMAEWWYLRPDKPESLTNPTNPLYAWVVH) lie on the Extracellular side of the membrane. The chain crosses the membrane as a helical span at residues 361-378 (LITALLLYGYLIPISLYV). The Cytoplasmic segment spans residues 379–943 (SIEVVKVLQA…HGHWCYKRIA (565 aa)). The active-site 4-aspartylphosphate intermediate is the Asp-426. A Glycyl lysine isopeptide (Lys-Gly) (interchain with G-Cter in ubiquitin) cross-link involves residue Lys-625. The Mg(2+) site is built by Asp-888 and Asp-892. Residues 944–963 (QMICYFFYKNITFGLTLFYF) form a helical membrane-spanning segment. Topologically, residues 964 to 977 (ECFTGFSGQSIYND) are extracellular. Residues 978–997 (SYLLLFNVVLTSLPVISLGV) traverse the membrane as a helical segment. At 998–1027 (FEQDVPSDVCLQFPALYQQGPKNLFFDWYR) the chain is on the cytoplasmic side. The chain crosses the membrane as a helical span at residues 1028–1050 (ILGWMGNGVYASIVIFTLNLGIF). The Extracellular portion of the chain corresponds to 1051 to 1063 (HVQSFRSDGQTAD). Residues 1064-1086 (MNAMGTAMFTCIIWAVNVQIALT) traverse the membrane as a helical segment. The Cytoplasmic segment spans residues 1087-1092 (MSHFTW). The chain crosses the membrane as a helical span at residues 1093–1113 (IQHVMIWGSIGAWYVFLALYG). The Extracellular segment spans residues 1114–1130 (MLPVKLSGNIFHMLVEI). Residues 1131-1155 (LAPAPIFWLTSLLVIAATTLPYLFH) traverse the membrane as a helical segment. Topologically, residues 1156 to 1240 (ISYQRSVNPL…SNDTPSSNSQ (85 aa)) are cytoplasmic.

Belongs to the cation transport ATPase (P-type) (TC 3.A.3) family. Type IV subfamily.

The protein resides in the cell membrane. It localises to the endomembrane system. It carries out the reaction ATP + H2O + phospholipidSide 1 = ADP + phosphate + phospholipidSide 2.. In terms of biological role, involved in transport of phospholipids and in regulation of pollen plasma membrane lipid asymmetry. In Arabidopsis thaliana (Mouse-ear cress), this protein is Phospholipid-transporting ATPase 6.